Here is a 377-residue protein sequence, read N- to C-terminus: Homoserine O-succinyltransferase (377 aa).

Residues 45–356 (NAVLVCHALN…PHGHDAFLLD (312 aa)) enclose the AB hydrolase-1 domain. Ser151 acts as the Nucleophile in catalysis. Residue Arg221 coordinates substrate. Active-site residues include Asp317 and His350. Asp351 is a substrate binding site.

Belongs to the AB hydrolase superfamily. MetX family. As to quaternary structure, homodimer.

The protein resides in the cytoplasm. The enzyme catalyses L-homoserine + succinyl-CoA = O-succinyl-L-homoserine + CoA. It participates in amino-acid biosynthesis; L-methionine biosynthesis via de novo pathway; O-succinyl-L-homoserine from L-homoserine: step 1/1. Its function is as follows. Transfers a succinyl group from succinyl-CoA to L-homoserine, forming succinyl-L-homoserine. The chain is Homoserine O-succinyltransferase from Leptothrix cholodnii (strain ATCC 51168 / LMG 8142 / SP-6) (Leptothrix discophora (strain SP-6)).